Here is a 633-residue protein sequence, read N- to C-terminus: MALLTRIRGPRDLDRLTPAQLAELAEEIRAFLVEEVSKTGGHLGPNLGVVELTLAMHRVFDSPRDRILFDTGHQSYVHKLLTGRQDFSRLKMKGGLSGYPSRAESEHDVIENSHASTVLGYADGLAKANKIQGHKDRPVVAVIGDGALTGGMAWEALNNIADSQDLPIVIVVNDNERSYSPTIGGLANHLATLRTTQGYERFLSWGKDALQRTPVVGQAMFDTLHGAKKGLKDFIAPQGMFEDLGLKYLGPIDGHDLQALESAFTKARNFGGPVIVHCITEKGRGYHAAENNDEDRFHAVGVIHPDTGLPVKTSGKDWTSVFGEEMVALGRERRDLVAITAAMLHPVGLAPFAKAYPERIFDVGIAEQHAAVCAAGLATNGLHPVVAVYATFLNRAFDQVLMDVALHKLGVTFVLDRAGVTGTDGASHNGMWDMSILQVVPGLRLAAPRDAEQVRLQLREAVEVADAPTVVRYSKGNVGPAVPAVGTVGGMDVLRRPEADSADEAADVLIVSIGAMAPTCLEAAELLAQQGISSTVVDPRWVKPVDAALPGLAAQHRLVVTVEDNGRAGGVGSAIAQALRDADVDVPLRDFGIPQEFLDHASRGEILDEIGLTAPAIAKKIEALVSTRSFARS.

Thiamine diphosphate is bound by residues His-73 and 113-115 (SHA). Asp-145 provides a ligand contact to Mg(2+). Residues 146–147 (GA), Asn-175, Tyr-286, and Glu-367 each bind thiamine diphosphate. A Mg(2+)-binding site is contributed by Asn-175.

It belongs to the transketolase family. DXPS subfamily. As to quaternary structure, homodimer. Mg(2+) is required as a cofactor. The cofactor is thiamine diphosphate.

It catalyses the reaction D-glyceraldehyde 3-phosphate + pyruvate + H(+) = 1-deoxy-D-xylulose 5-phosphate + CO2. It participates in metabolic intermediate biosynthesis; 1-deoxy-D-xylulose 5-phosphate biosynthesis; 1-deoxy-D-xylulose 5-phosphate from D-glyceraldehyde 3-phosphate and pyruvate: step 1/1. Its function is as follows. Catalyzes the acyloin condensation reaction between C atoms 2 and 3 of pyruvate and glyceraldehyde 3-phosphate to yield 1-deoxy-D-xylulose-5-phosphate (DXP). The sequence is that of 1-deoxy-D-xylulose-5-phosphate synthase 2 from Kitasatospora griseola (Streptomyces griseolosporeus).